We begin with the raw amino-acid sequence, 395 residues long: Chalcone synthase 1 (395 aa).

The residue at position 2 (valine 2) is an N-acetylvaline. Cysteine 169 is a catalytic residue.

Belongs to the thiolase-like superfamily. Chalcone/stilbene synthases family.

The enzyme catalyses (E)-4-coumaroyl-CoA + 3 malonyl-CoA + 3 H(+) = 2',4,4',6'-tetrahydroxychalcone + 3 CO2 + 4 CoA. It functions in the pathway secondary metabolite biosynthesis; flavonoid biosynthesis. Functionally, the primary product of this enzyme is 4,2',4',6'-tetrahydroxychalcone (also termed naringenin-chalcone or chalcone) which can under specific conditions spontaneously isomerize into naringenin. The sequence is that of Chalcone synthase 1 (CHS1) from Sinapis alba (White mustard).